We begin with the raw amino-acid sequence, 294 residues long: 4-hydroxy-tetrahydrodipicolinate synthase (294 aa).

Position 47 (T47) interacts with pyruvate. Y135 (proton donor/acceptor) is an active-site residue. Catalysis depends on K163, which acts as the Schiff-base intermediate with substrate. T205 serves as a coordination point for pyruvate.

The protein belongs to the DapA family. In terms of assembly, homotetramer; dimer of dimers.

It is found in the cytoplasm. The catalysed reaction is L-aspartate 4-semialdehyde + pyruvate = (2S,4S)-4-hydroxy-2,3,4,5-tetrahydrodipicolinate + H2O + H(+). Its pathway is amino-acid biosynthesis; L-lysine biosynthesis via DAP pathway; (S)-tetrahydrodipicolinate from L-aspartate: step 3/4. Its function is as follows. Catalyzes the condensation of (S)-aspartate-beta-semialdehyde [(S)-ASA] and pyruvate to 4-hydroxy-tetrahydrodipicolinate (HTPA). This Rickettsia conorii (strain ATCC VR-613 / Malish 7) protein is 4-hydroxy-tetrahydrodipicolinate synthase.